Consider the following 339-residue polypeptide: Putative methylthioribose-1-phosphate isomerase (339 aa).

Substrate-binding positions include 43 to 45 (RGA), arginine 86, and glutamine 191. The active-site Proton donor is aspartate 232. 241–242 (NK) lines the substrate pocket.

It belongs to the eIF-2B alpha/beta/delta subunits family. MtnA subfamily.

It catalyses the reaction 5-(methylsulfanyl)-alpha-D-ribose 1-phosphate = 5-(methylsulfanyl)-D-ribulose 1-phosphate. Functionally, catalyzes the interconversion of methylthioribose-1-phosphate (MTR-1-P) into methylthioribulose-1-phosphate (MTRu-1-P). The protein is Putative methylthioribose-1-phosphate isomerase of Archaeoglobus fulgidus (strain ATCC 49558 / DSM 4304 / JCM 9628 / NBRC 100126 / VC-16).